We begin with the raw amino-acid sequence, 3414 residues long: Genome polyprotein (3414 aa).

Residues 1 to 27 (MAGKAILKGKGGGPPRRVSKETAKKTR) form a disordered region. The Cytoplasmic portion of the chain corresponds to 1-98 (MAGKAILKGK…LQKRGKRRST (98 aa)). Residues 98–116 (TTDWTGWLLVAMLLSIALA) constitute a propeptide, ER anchor for the capsid protein C, removed in mature form by serine protease NS3. The chain crosses the membrane as a helical span at residues 99-119 (TDWTGWLLVAMLLSIALAATV). At 120–242 (RKEGDGTTVI…HLTRVEGWVW (123 aa)) the chain is on the extracellular side. N-linked (GlcNAc...) asparagine; by host glycosylation is present at Asn-144. Residues 243-260 (KNKSLTLAVVVIVWMTVE) form a helical membrane-spanning segment. A topological domain (cytoplasmic) is located at residue Ser-261. A helical membrane pass occupies residues 262–280 (AVTRIVIVSALLCLAPAYA). Over 281–727 (SRCTHLENRD…HTVLGGAFNS (447 aa)) the chain is Extracellular. Disulfide bonds link Cys-283/Cys-310, Cys-340/Cys-396, Cys-340/Cys-401, Cys-354/Cys-385, Cys-372/Cys-396, and Cys-372/Cys-401. The tract at residues 378 to 391 (DRGWGNHCGLFGKG) is fusion peptide. Asn-434 carries N-linked (GlcNAc...) asparagine; by host glycosylation. Intrachain disulfides connect Cys-466/Cys-570 and Cys-587/Cys-618. Residues 728–748 (VFGGVGFLPRILLGISLAWLG) traverse the membrane as a helical segment. The Cytoplasmic segment spans residues 749–755 (LNMRNPT). A helical membrane pass occupies residues 756 to 776 (MSMSFLLAGGLVLTMTLGVGA). Topologically, residues 777–1132 (DVGCAVDTER…RSMVVADNGE (356 aa)) are extracellular. 6 cysteine pairs are disulfide-bonded: Cys-780/Cys-791, Cys-831/Cys-920, Cys-955/Cys-1000, Cys-1057/Cys-1106, Cys-1068/Cys-1090, and Cys-1089/Cys-1093. Residues Asn-861, Asn-983, and Asn-999 are each glycosylated (N-linked (GlcNAc...) asparagine; by host). A helical membrane pass occupies residues 1133–1153 (LLSEGGIPGIVAVFVVLEYII). Over 1154–1158 (RKRPS) the chain is Cytoplasmic. Residues 1159–1179 (AGLTVVWGGVVVLALLVTGMV) traverse the membrane as a helical segment. Residues 1180 to 1187 (TLQSMLRY) lie on the Lumenal side of the membrane. Residues 1188–1208 (VIAVGVTFHLELGPEIVALML) traverse the membrane as a helical segment. Over 1209-1236 (LQAVFELRVGLLGAFVLRRSLTTREVVT) the chain is Cytoplasmic. Residues 1237-1257 (IYFLLLVLELGLPSANLEALW) form a helical membrane-spanning segment. At 1258 to 1293 (GWADALAMGAMIFRACTAEGKTGLGLLLVALMTQQN) the chain is on the lumenal side. A helical membrane pass occupies residues 1294-1314 (AVIVHQGLVIFLSVASACSVW). The Cytoplasmic portion of the chain corresponds to 1315–1363 (KLLRGQREQKGLSWIVPLAGRLGGKGSGIRLLAFWELASRRDRRSFSEP). A helical transmembrane segment spans residues 1364–1381 (LTVVGVMLTLASGMMRHT). Ser-1382 is a topological domain (lumenal). The helical transmembrane segment at 1383–1403 (QEALCALAAASFLLLMLVLGT) threads the bilayer. Over 1404–1454 (RKMQLVAEWSGCVEWHPDLADEGGEISLRVRQDALGNFHLTELEKEERMMA) the chain is Cytoplasmic. Positions 1410 to 1449 (AEWSGCVEWHPDLADEGGEISLRVRQDALGNFHLTELEKE) are interacts with and activates NS3 protease. An intramembrane region (helical) is located at residues 1455–1475 (FWLLAGLTASALHWTGILVVM). The Cytoplasmic segment spans residues 1476-2160 (GLWTMSEMLR…KMAERDAPEA (685 aa)). A Peptidase S7 domain is found at 1490-1669 (SDLVFSGQSG…EVEKSRPNLP (180 aa)). Residues His-1543, Asp-1567, and Ser-1627 each act as charge relay system; for serine protease NS3 activity in the active site. A Helicase ATP-binding domain is found at 1675-1831 (TGWTSKGTIT…ESNGAITSEE (157 aa)). 1688-1695 (MHPGSGKT) contacts ATP. Residues 1779–1782 (DEAH) carry the DEAH box motif. One can recognise a Helicase C-terminal domain in the interval 1841 to 2000 (DGFDWITEYE…TLRGPVATFY (160 aa)). At Lys-1883 the chain carries N6-acetyllysine; by host. Residues 2161–2181 (FLTMVEMVVLGLATLGAVWCL) traverse the membrane as a helical segment. At 2182 to 2189 (VLRTSISR) the chain is on the lumenal side. An intramembrane region (helical) is located at residues 2190 to 2210 (MMLGTMVLLVSLALLWAGGVG). Tyr-2211 is a topological domain (lumenal). A helical membrane pass occupies residues 2212 to 2232 (GSMAGVALVFYTLLTVLQPEA). At 2233–2244 (GKQRSSDDNKLA) the chain is on the cytoplasmic side. The chain crosses the membrane as a helical span at residues 2245 to 2265 (YFLLTLCSLAGLVAANEMGFL). Over 2266–2299 (EKTKADLSAVLWSEREEPRVWSEWTNIDIQPAKS) the chain is Lumenal. The helical intramembrane region spans 2300–2320 (WGTYVLVVSLFTPYIIHQLQT). Over 2321–2343 (RIQQLVNSAVASGAQAMRDLGGG) the chain is Lumenal. The segment at residues 2344–2364 (TPFFGVAGHVLTLGVVSLVGA) is an intramembrane region (helical). At 2365–2368 (TPTS) the chain is on the lumenal side. A helical transmembrane segment spans residues 2369–2389 (LVVGVGLAAFHLAIVVSGLEA). Residues 2390 to 2432 (ELTQRAHKVFFSAMVRNPMVDGDVINPFGDGEVKPALYERKMS) lie on the Cytoplasmic side of the membrane. The chain crosses the membrane as a helical span at residues 2433-2453 (LILAMILCFMSVVLNRTVPAV). Topologically, residues 2454–2477 (TEASAVGLAAAGQLIRPEADTLWT) are lumenal. A helical membrane pass occupies residues 2478-2498 (MPVACGLSGVVRGSLWGFLPL). At 2499-3414 (GHRLWLRTSG…WELKVESSII (916 aa)) the chain is on the cytoplasmic side. Residues 2512 to 2776 (GGSEGDTLGD…EMDLGVGTRC (265 aa)) enclose the mRNA cap 0-1 NS5-type MT domain. Ser-2567 serves as a coordination point for S-adenosyl-L-methionine. Ser-2567 is subject to Phosphoserine. Lys-2572 acts as the For 2'-O-MTase activity in catalysis. Residues Gly-2597, Trp-2598, Thr-2615, Ile-2616, and Val-2643 each coordinate S-adenosyl-L-methionine. The active-site For 2'-O-MTase activity is the Asp-2657. Residue Ile-2658 coordinates S-adenosyl-L-methionine. Residues Lys-2694 and Glu-2730 each act as for 2'-O-MTase activity in the active site. Residues 2730–2734 (EMYYS) are interaction with host SCRIB. Tyr-2732 contributes to the S-adenosyl-L-methionine binding site. 4 residues coordinate Zn(2+): Glu-2950, His-2954, Cys-2959, and Cys-2962. The RdRp catalytic domain maps to 3040–3189 (GLFYADDTAG…RPIDDRFSKA (150 aa)). Zn(2+) contacts are provided by His-3224, Cys-3240, and Cys-3359.

The protein in the N-terminal section; belongs to the class I-like SAM-binding methyltransferase superfamily. mRNA cap 0-1 NS5-type methyltransferase family. In terms of assembly, homodimer. Forms heterodimers with envelope protein E in the endoplasmic reticulum and Golgi. As to quaternary structure, homodimer; in the endoplasmic reticulum and Golgi. In terms of assembly, forms homodimers as well as homohexamers. NS1 may interact with NS4A. Forms a heterodimer with serine protease NS3. May form homooligomers. As to quaternary structure, forms a heterodimer with NS2B. Interacts with NS4B. Interacts with unphosphorylated RNA-directed RNA polymerase NS5; this interaction stimulates RNA-directed RNA polymerase NS5 guanylyltransferase activity. In terms of assembly, interacts with serine protease NS3. Interacts with host STAT2; this interaction inhibits the phosphorylation of the latter, and, when all viral proteins are present (polyprotein), targets STAT2 for degradation. Specific enzymatic cleavages in vivo yield mature proteins. Cleavages in the lumen of endoplasmic reticulum are performed by host signal peptidase, whereas cleavages in the cytoplasmic side are performed by serine protease NS3. Signal cleavage at the 2K-4B site requires a prior NS3 protease-mediated cleavage at the 4A-2K site. In terms of processing, cleaved in post-Golgi vesicles by a host furin, releasing the mature small envelope protein M, and peptide pr. This cleavage is incomplete as up to 30% of viral particles still carry uncleaved prM. Post-translationally, N-glycosylated. N-glycosylated. The excreted form is glycosylated and this is required for efficient secretion of the protein from infected cells. In terms of processing, acetylated by host KAT5. Acetylation modulates NS3 RNA-binding and unwinding activities and plays an important positive role for viral replication. Post-translationally, phosphorylated on serines residues. This phosphorylation may trigger NS5 nuclear localization.

The protein resides in the virion. It is found in the host nucleus. The protein localises to the host cytoplasm. It localises to the host perinuclear region. Its subcellular location is the secreted. The protein resides in the virion membrane. It is found in the host endoplasmic reticulum membrane. It catalyses the reaction Selective hydrolysis of -Xaa-Xaa-|-Yaa- bonds in which each of the Xaa can be either Arg or Lys and Yaa can be either Ser or Ala.. The catalysed reaction is RNA(n) + a ribonucleoside 5'-triphosphate = RNA(n+1) + diphosphate. It carries out the reaction a ribonucleoside 5'-triphosphate + H2O = a ribonucleoside 5'-diphosphate + phosphate + H(+). The enzyme catalyses ATP + H2O = ADP + phosphate + H(+). It catalyses the reaction a 5'-end (5'-triphosphoguanosine)-ribonucleoside in mRNA + S-adenosyl-L-methionine = a 5'-end (N(7)-methyl 5'-triphosphoguanosine)-ribonucleoside in mRNA + S-adenosyl-L-homocysteine. The catalysed reaction is a 5'-end (N(7)-methyl 5'-triphosphoguanosine)-ribonucleoside in mRNA + S-adenosyl-L-methionine = a 5'-end (N(7)-methyl 5'-triphosphoguanosine)-(2'-O-methyl-ribonucleoside) in mRNA + S-adenosyl-L-homocysteine + H(+). Its function is as follows. Plays a role in virus budding by binding to the cell membrane and gathering the viral RNA into a nucleocapsid that forms the core of a mature virus particle. During virus entry, may induce genome penetration into the host cytoplasm after hemifusion induced by the surface proteins. Can migrate to the cell nucleus where it modulates host functions. Functionally, inhibits RNA silencing by interfering with host Dicer. In terms of biological role, prevents premature fusion activity of envelope proteins in trans-Golgi by binding to envelope protein E at pH6.0. After virion release in extracellular space, gets dissociated from E dimers. Acts as a chaperone for envelope protein E during intracellular virion assembly by masking and inactivating envelope protein E fusion peptide. prM is the only viral peptide matured by host furin in the trans-Golgi network probably to avoid catastrophic activation of the viral fusion activity in acidic Golgi compartment prior to virion release. prM-E cleavage is inefficient, and many virions are only partially matured. These uncleaved prM would play a role in immune evasion. Its function is as follows. May play a role in virus budding. Exerts cytotoxic effects by activating a mitochondrial apoptotic pathway through M ectodomain. May display a viroporin activity. Functionally, binds to host cell surface receptor and mediates fusion between viral and cellular membranes. Envelope protein is synthesized in the endoplasmic reticulum in the form of heterodimer with protein prM. They play a role in virion budding in the ER, and the newly formed immature particle is covered with 60 spikes composed of heterodimer between precursor prM and envelope protein E. The virion is transported to the Golgi apparatus where the low pH causes dissociation of PrM-E heterodimers and formation of E homodimers. prM-E cleavage is inefficient, and many virions are only partially matured. These uncleaved prM would play a role in immune evasion. In terms of biological role, involved in immune evasion, pathogenesis and viral replication. Once cleaved off the polyprotein, is targeted to three destinations: the viral replication cycle, the plasma membrane and the extracellular compartment. Essential for viral replication. Required for formation of the replication complex and recruitment of other non-structural proteins to the ER-derived membrane structures. Excreted as a hexameric lipoparticle that plays a role against host immune response. Antagonizing the complement function. Binds to the host macrophages and dendritic cells. Inhibits signal transduction originating from Toll-like receptor 3 (TLR3). Component of the viral RNA replication complex that functions in virion assembly and antagonizes the host immune response. Its function is as follows. Required cofactor for the serine protease function of NS3. May have membrane-destabilizing activity and form viroporins. Functionally, displays three enzymatic activities: serine protease, NTPase and RNA helicase. NS3 serine protease, in association with NS2B, performs its autocleavage and cleaves the polyprotein at dibasic sites in the cytoplasm: C-prM, NS2A-NS2B, NS2B-NS3, NS3-NS4A, NS4A-2K and NS4B-NS5. NS3 RNA helicase binds RNA and unwinds dsRNA in the 3' to 5' direction. In terms of biological role, regulates the ATPase activity of the NS3 helicase activity. NS4A allows NS3 helicase to conserve energy during unwinding. Functions as a signal peptide for NS4B and is required for the interferon antagonism activity of the latter. Its function is as follows. Induces the formation of ER-derived membrane vesicles where the viral replication takes place. Inhibits interferon (IFN)-induced host STAT1 phosphorylation and nuclear translocation, thereby preventing the establishment of cellular antiviral state by blocking the IFN-alpha/beta pathway. Inhibits STAT2 translocation in the nucleus after IFN-alpha treatment. Functionally, replicates the viral (+) and (-) RNA genome, and performs the capping of genomes in the cytoplasm. NS5 methylates viral RNA cap at guanine N-7 and ribose 2'-O positions. Besides its role in RNA genome replication, also prevents the establishment of cellular antiviral state by blocking the interferon-alpha/beta (IFN-alpha/beta) signaling pathway. Inhibits host TYK2 and STAT2 phosphorylation, thereby preventing activation of JAK-STAT signaling pathway. In Homo sapiens (Human), this protein is Genome polyprotein.